Reading from the N-terminus, the 232-residue chain is Fibrillarin-like rRNA/tRNA 2'-O-methyltransferase (232 aa).

S-adenosyl-L-methionine contacts are provided by residues 89-90 (TT), 108-109 (EF), 133-134 (DA), and 153-156 (DIAQ).

This sequence belongs to the methyltransferase superfamily. Fibrillarin family. In terms of assembly, interacts with nop5. Component of box C/D small ribonucleoprotein (sRNP) particles that contain rpl7ae, FlpA and nop5, plus a guide RNA.

In terms of biological role, involved in pre-rRNA and tRNA processing. Utilizes the methyl donor S-adenosyl-L-methionine to catalyze the site-specific 2'-hydroxyl methylation of ribose moieties in rRNA and tRNA. Site specificity is provided by a guide RNA that base pairs with the substrate. Methylation occurs at a characteristic distance from the sequence involved in base pairing with the guide RNA. The polypeptide is Fibrillarin-like rRNA/tRNA 2'-O-methyltransferase (Methanopyrus kandleri (strain AV19 / DSM 6324 / JCM 9639 / NBRC 100938)).